A 557-amino-acid chain; its full sequence is uncharacterized protein (557 aa).

A DhaL domain is found at Ser7–Ser206.

This is an uncharacterized protein from Mycoplasma genitalium (strain ATCC 33530 / DSM 19775 / NCTC 10195 / G37) (Mycoplasmoides genitalium).